We begin with the raw amino-acid sequence, 148 residues long: MAEPDFVITLIGSKLAVPGTEFIYRGPAGECEKCKLKNICLNLDKNKKYRIVGLRNGMELDCLVHDTGVKAVEVVACPIIAVMESRKAFNGSRMTYEAPECDESCLNFALCHPEGIATGEKYTICEVFSEEVGPCKKGLTLKKVELRP.

It belongs to the UPF0179 family.

The polypeptide is UPF0179 protein UNCMA_27840 (Methanocella arvoryzae (strain DSM 22066 / NBRC 105507 / MRE50)).